Reading from the N-terminus, the 213-residue chain is NADH dehydrogenase [ubiquinone] iron-sulfur protein 7, mitochondrial (213 aa).

Residues 1–38 constitute a mitochondrion transit peptide; it reads MAVLSAPGLRGFRILGLRSSVGPAVQARGVHQSVATDG. The disordered stretch occupies residues 31–53; that stretch reads HQSVATDGPSSTQPALPKARAVA. The span at 33-44 shows a compositional bias: polar residues; the sequence is SVATDGPSSTQP. [4Fe-4S] cluster-binding residues include Cys88 and Cys89. Arg111 bears the Hydroxyarginine mark. [4Fe-4S] cluster contacts are provided by Cys153 and Cys183.

This sequence belongs to the complex I 20 kDa subunit family. Core subunit of respiratory chain NADH dehydrogenase (Complex I) which is composed of 45 different subunits. This is a component of the iron-sulfur (IP) fragment of the enzyme. [4Fe-4S] cluster serves as cofactor. Post-translationally, hydroxylated at Arg-111 by NDUFAF5 early in the pathway of assembly of complex I, before the formation of the juncture between peripheral and membrane arms.

Its subcellular location is the mitochondrion inner membrane. The enzyme catalyses a ubiquinone + NADH + 5 H(+)(in) = a ubiquinol + NAD(+) + 4 H(+)(out). Core subunit of the mitochondrial membrane respiratory chain NADH dehydrogenase (Complex I) which catalyzes electron transfer from NADH through the respiratory chain, using ubiquinone as an electron acceptor. Essential for the catalytic activity of complex I. The polypeptide is NADH dehydrogenase [ubiquinone] iron-sulfur protein 7, mitochondrial (NDUFS7) (Homo sapiens (Human)).